The sequence spans 190 residues: MAPDGSIARPTVLTGPSGVGKGTLVARLRERHPEIWLSVSATTRAPRSGEIDGIHYFFHSKERFNKLVQSGGLLEWAEFAGNCYGTPREPVSERVANGIPVLLEIELEGARQVRKSLPEAIQIFLAPPSVEELEKRIRGRGTEAEEAIQRRLKRAQEELEAQTEFDAVIVNDDLETALAELEKQMNLTIS.

The Guanylate kinase-like domain maps to 8-186; it reads ARPTVLTGPS…ALAELEKQMN (179 aa). 15–22 is an ATP binding site; sequence GPSGVGKG.

This sequence belongs to the guanylate kinase family.

It localises to the cytoplasm. The catalysed reaction is GMP + ATP = GDP + ADP. It carries out the reaction dZMP + ATP = dZDP + ADP. Its pathway is purine metabolism. In terms of biological role, essential for recycling GMP and indirectly, cGMP. (Microbial infection) Catalyzes the phosphorylation of dZMP to dZDP, when the bacterium is infected by a phage that produces the substrate for the synthesis of dZTP (2- amino-2'-deoxyadenosine 5'-triphosphate), which is then used by the phage as a DNA polymerase substrate. This is Guanylate kinase from Synechococcus sp. (strain CC9311).